The chain runs to 99 residues: Large ribosomal subunit protein uL23 (99 aa).

The protein belongs to the universal ribosomal protein uL23 family. As to quaternary structure, part of the 50S ribosomal subunit. Contacts protein L29, and trigger factor when it is bound to the ribosome.

In terms of biological role, one of the early assembly proteins it binds 23S rRNA. One of the proteins that surrounds the polypeptide exit tunnel on the outside of the ribosome. Forms the main docking site for trigger factor binding to the ribosome. The chain is Large ribosomal subunit protein uL23 from Francisella tularensis subsp. tularensis (strain SCHU S4 / Schu 4).